Here is a 415-residue protein sequence, read N- to C-terminus: 4-hydroxy-3-methylbut-2-en-1-yl diphosphate synthase (flavodoxin) (415 aa).

Cysteine 298, cysteine 301, cysteine 344, and glutamate 351 together coordinate [4Fe-4S] cluster.

This sequence belongs to the IspG family. It depends on [4Fe-4S] cluster as a cofactor.

It catalyses the reaction (2E)-4-hydroxy-3-methylbut-2-enyl diphosphate + oxidized [flavodoxin] + H2O + 2 H(+) = 2-C-methyl-D-erythritol 2,4-cyclic diphosphate + reduced [flavodoxin]. The protein operates within isoprenoid biosynthesis; isopentenyl diphosphate biosynthesis via DXP pathway; isopentenyl diphosphate from 1-deoxy-D-xylulose 5-phosphate: step 5/6. Its function is as follows. Converts 2C-methyl-D-erythritol 2,4-cyclodiphosphate (ME-2,4cPP) into 1-hydroxy-2-methyl-2-(E)-butenyl 4-diphosphate. The protein is 4-hydroxy-3-methylbut-2-en-1-yl diphosphate synthase (flavodoxin) of Solibacter usitatus (strain Ellin6076).